Reading from the N-terminus, the 787-residue chain is Serine/threonine-protein kinase PLK4 (787 aa).

The region spanning 14-268 is the Protein kinase domain; the sequence is YEVQHLLGKG…LEQVLRHPFM (255 aa). Residues 20 to 28 and Lys43 each bind ATP; that span reads LGKGGFASV. Asp139 functions as the Proton acceptor in the catalytic mechanism. Residues 311–336 form a disordered region; it reads SNESRSSQRLRSIEKSAQSSSNPQML. In terms of domain architecture, Cryptic POLO box 1 (CPB1) spans 386–505; it reads EQQMRVPPLN…ARFVGLVKSK (120 aa). In terms of domain architecture, Cryptic POLO box 2 (CPB2) spans 506-613; that stretch reads TPKITYFSSL…GRRPLTDVSH (108 aa). Positions 675-755 constitute a POLO box domain; sequence PIKRINIPDV…IPQVKLRLKC (81 aa).

Belongs to the protein kinase superfamily. Ser/Thr protein kinase family. CDC5/Polo subfamily. As to quaternary structure, homodimer. Post-translationally, ubiquitinated by the SCF(Slimb) ubiquitin ligase complex; leading to its degradation by the proteasome during interphase and regulating centriole number and ensuring the block to centriole reduplication.

The protein resides in the cytoplasm. Its subcellular location is the cytoskeleton. It is found in the microtubule organizing center. It localises to the centrosome. The protein localises to the centriole. The catalysed reaction is L-seryl-[protein] + ATP = O-phospho-L-seryl-[protein] + ADP + H(+). It catalyses the reaction L-threonyl-[protein] + ATP = O-phospho-L-threonyl-[protein] + ADP + H(+). In terms of biological role, serine/threonine-protein kinase that plays a central role in centriole duplication. Able to trigger procentriole formation on the surface of the mother centriole cylinder, using mother centriole as a platform, leading to the recruitment of centriole biogenesis proteins such as sas-6. When overexpressed, it is able to induce centrosome amplification through the simultaneous generation of multiple procentrioles adjoining each parental centriole during S phase. Centrosome amplification following overexpression can initiate tumorigenesis, highlighting the importance of centrosome regulation in cancers. This Drosophila willistoni (Fruit fly) protein is Serine/threonine-protein kinase PLK4 (SAK).